The following is a 433-amino-acid chain: N-lysine methyltransferase SMYD2 (433 aa).

One can recognise an SET domain in the interval 7–241 (GGLERFCSPG…PGEEVFTSYI (235 aa)). 17 to 19 (KGR) is a binding site for S-adenosyl-L-methionine. 8 residues coordinate Zn(2+): Cys-52, Cys-55, Cys-65, Cys-68, Cys-74, Cys-78, His-86, and Cys-90. The segment at 52 to 90 (CEFCFARKEGLSKCGRCKQAFYCNVECQKEDWPMHKLEC) adopts an MYND-type zinc-finger fold. Residues His-137, 206-207 (NH), and 258-260 (YFF) each bind S-adenosyl-L-methionine.

The protein belongs to the class V-like SAM-binding methyltransferase superfamily. In terms of assembly, interacts with RNA polymerase II and HELZ. Interacts with SIN3A and HDAC1. Interacts (via MYND-type zinc finger) with EPB41L3. Interacts (via SET domain) with p53/TP53. Interacts with RB1 and HSP90AA1.

The protein localises to the cytoplasm. The protein resides in the cytosol. It is found in the nucleus. The catalysed reaction is L-lysyl(4)-[histone H3] + 3 S-adenosyl-L-methionine = N(6),N(6),N(6)-trimethyl-L-lysyl(4)-[histone H3] + 3 S-adenosyl-L-homocysteine + 3 H(+). It catalyses the reaction L-lysyl-[protein] + S-adenosyl-L-methionine = N(6)-methyl-L-lysyl-[protein] + S-adenosyl-L-homocysteine + H(+). Its function is as follows. Protein-lysine N-methyltransferase that methylates both histones and non-histone proteins, including p53/TP53 and RB1. Specifically trimethylates histone H3 'Lys-4' (H3K4me3) in vivo. The activity requires interaction with HSP90alpha. Shows even higher methyltransferase activity on p53/TP53. Monomethylates 'Lys-370' of p53/TP53, leading to decreased DNA-binding activity and subsequent transcriptional regulation activity of p53/TP53. Monomethylates RB1 at 'Lys-860'. This chain is N-lysine methyltransferase SMYD2 (SMYD2), found in Sus scrofa (Pig).